We begin with the raw amino-acid sequence, 126 residues long: MPEPAKSAPAPKKGSKKAVTKTPKKDGKKRRKSRKESYAIYVYKVMKQVHPDTGISSKAMGIMNSFVNDIFERIAGEASRLAHYNKRSTITSREIQTAVRLLLPGELAKHAVSEGTKAVTKYTSAK.

The segment covering 1–12 (MPEPAKSAPAPK) has biased composition (low complexity). Positions 1–35 (MPEPAKSAPAPKKGSKKAVTKTPKKDGKKRRKSRK) are disordered. K6 and K13 each carry N6-acetyllysine. Phosphoserine is present on S15. An N6-acetyllysine mark is found at K16 and K21. S113 carries O-linked (GlcNAc) serine glycosylation. Residue K121 forms a Glycyl lysine isopeptide (Lys-Gly) (interchain with G-Cter in ubiquitin) linkage.

The protein belongs to the histone H2B family. As to quaternary structure, the nucleosome is a histone octamer containing two molecules each of H2A, H2B, H3 and H4 assembled in one H3-H4 heterotetramer and two H2A-H2B heterodimers. The octamer wraps approximately 147 bp of DNA. Post-translationally, monoubiquitination of Lys-121 by BRE1 gives a specific tag for epigenetic transcriptional activation and is also prerequisite for histone H3 'Lys-4' and 'Lys-79' methylation. In terms of processing, phosphorylated on Ser-15 during developmentally programmed apoptosis; which may facilitate apoptotic chromatin condensation. GlcNAcylation at Ser-113 promotes monoubiquitination of Lys-121. It fluctuates in response to extracellular glucose, and associates with transcribed genes.

The protein localises to the nucleus. Its subcellular location is the chromosome. Its function is as follows. Core component of nucleosome. Nucleosomes wrap and compact DNA into chromatin, limiting DNA accessibility to the cellular machineries which require DNA as a template. Histones thereby play a central role in transcription regulation, DNA repair, DNA replication and chromosomal stability. DNA accessibility is regulated via a complex set of post-translational modifications of histones, also called histone code, and nucleosome remodeling. In Xenopus laevis (African clawed frog), this protein is Histone H2B 1.2.